The sequence spans 342 residues: Dihydroorotase (342 aa).

2 residues coordinate Zn(2+): histidine 13 and histidine 15. Substrate contacts are provided by residues 15-17 (HLR) and asparagine 41. Zn(2+) contacts are provided by lysine 98, histidine 135, and histidine 173. Lysine 98 is modified (N6-carboxylysine). Histidine 135 is a binding site for substrate. Substrate is bound at residue leucine 218. A Zn(2+)-binding site is contributed by aspartate 246. Residue aspartate 246 is part of the active site. Residues histidine 250 and alanine 262 each contribute to the substrate site.

It belongs to the metallo-dependent hydrolases superfamily. DHOase family. Class II DHOase subfamily. As to quaternary structure, homodimer. Requires Zn(2+) as cofactor.

It carries out the reaction (S)-dihydroorotate + H2O = N-carbamoyl-L-aspartate + H(+). It functions in the pathway pyrimidine metabolism; UMP biosynthesis via de novo pathway; (S)-dihydroorotate from bicarbonate: step 3/3. Its function is as follows. Catalyzes the reversible cyclization of carbamoyl aspartate to dihydroorotate. This is Dihydroorotase from Vibrio campbellii (strain ATCC BAA-1116).